The primary structure comprises 473 residues: Pup--protein ligase (473 aa).

Glutamate 9 is a binding site for Mg(2+). ATP is bound at residue arginine 54. Tyrosine 56 lines the Mg(2+) pocket. The active-site Proton acceptor is aspartate 58. Position 64 (glutamate 64) interacts with Mg(2+). 2 residues coordinate ATP: threonine 67 and tryptophan 425.

Belongs to the Pup ligase/Pup deamidase family. Pup-conjugating enzyme subfamily.

The catalysed reaction is ATP + [prokaryotic ubiquitin-like protein]-L-glutamate + [protein]-L-lysine = ADP + phosphate + N(6)-([prokaryotic ubiquitin-like protein]-gamma-L-glutamyl)-[protein]-L-lysine.. It participates in protein degradation; proteasomal Pup-dependent pathway. Its pathway is protein modification; protein pupylation. Its function is as follows. Catalyzes the covalent attachment of the prokaryotic ubiquitin-like protein modifier Pup to the proteasomal substrate proteins, thereby targeting them for proteasomal degradation. This tagging system is termed pupylation. The ligation reaction involves the side-chain carboxylate of the C-terminal glutamate of Pup and the side-chain amino group of a substrate lysine. The sequence is that of Pup--protein ligase from Brachybacterium faecium (strain ATCC 43885 / DSM 4810 / JCM 11609 / LMG 19847 / NBRC 14762 / NCIMB 9860 / 6-10).